The primary structure comprises 547 residues: Chaperonin GroEL (547 aa).

ATP is bound by residues 29-32 (TLGP), Lys-50, 86-90 (DGTTT), Gly-414, 478-480 (NAA), and Asp-494.

The protein belongs to the chaperonin (HSP60) family. As to quaternary structure, forms a cylinder of 14 subunits composed of two heptameric rings stacked back-to-back. Interacts with the co-chaperonin GroES.

It localises to the cytoplasm. The catalysed reaction is ATP + H2O + a folded polypeptide = ADP + phosphate + an unfolded polypeptide.. Functionally, together with its co-chaperonin GroES, plays an essential role in assisting protein folding. The GroEL-GroES system forms a nano-cage that allows encapsulation of the non-native substrate proteins and provides a physical environment optimized to promote and accelerate protein folding. In Saccharophagus degradans (strain 2-40 / ATCC 43961 / DSM 17024), this protein is Chaperonin GroEL.